The primary structure comprises 649 residues: Epithelial sodium channel subunit gamma (649 aa).

Over 1–55 (MAPGEKIKAKIKKNLPVTGPQAPTIKELMRWYCLNTNTHGCRRIVVSRGRLRRLL) the chain is Cytoplasmic. A helical transmembrane segment spans residues 56 to 76 (WIGFTLTAVALILWQCALLVF). The Extracellular segment spans residues 77–541 (SFYTVSVSIK…GGQLGLWMSC (465 aa)). Intrachain disulfides connect Cys100–Cys283, Cys207–Cys214, Cys260–Cys267, Cys372–Cys457, Cys394–Cys453, Cys398–Cys449, Cys407–Cys434, and Cys409–Cys423. A gating release of inhibition by proteolysis (GRIP); protease-sensitive region that is responsible for the proteolytic activation of the channel region spans residues 135-221 (RKRREAESWN…SDCATYTFSS (87 aa)). Asn209 is a glycosylation site (N-linked (GlcNAc...) asparagine). A glycan (N-linked (GlcNAc...) asparagine) is linked at Asn497. The chain crosses the membrane as a helical span at residues 542 to 562 (SVVCVIEIIEVFFIDFFSIIA). Topologically, residues 563–649 (RRQWQKAKEW…LTDTQMLDEL (87 aa)) are cytoplasmic. A PY motif; recruits WW domain-containing proteins and is thereby required for ubiquitination and inhibition of the channel by NEDD4 and NEDD4L motif is present at residues 623–627 (PPPKY).

It belongs to the amiloride-sensitive sodium channel (TC 1.A.6) family. SCNN1G subfamily. As to quaternary structure, component of the heterotrimeric epithelial sodium channel (ENaC) composed of an alpha/SCNN1A, a beta/SCNN1B and a gamma/SCNN1G subunit. An additional delta/SCNN1D subunit can replace the alpha/SCNN1A subunit to form an alternative channel with specific properties. Interacts with WWP1 (via WW domains). Interacts with WWP2 (via WW domains); inhibits the channel. Interacts with the full-length immature form of PCSK9 (pro-PCSK9); inhibits ENaC by promoting its proteasomal degradation. Interacts with BPIFA1; the interaction is indirect via SCNN1B and inhibits the proteolytic maturation of SCNN1A and SCNN1G and the activation of ENaC. Phosphorylated on serine and threonine residues. Aldosterone and insulin increase the basal level of phosphorylation. In terms of processing, ubiquitinated. Can be ubiquitinated at multiple sites and undergo monoubiquitination and polyubiquitination. Ubiquitination by NEDD4 or NEDD4L inhibits the ENaC channel through endocytosis, intracellular retention and degradation of its individual subunits. Post-translationally, ENaC is activated through the proteolytic maturation of its subunits. Furin cleaves the SCNN1G subunit first, followed by cleavage by prostasin (PRSS8), which results in a stepwise increase in the open probability of the channel due to the release of an inhibitory tract. BPIFA1, which is recruited by the SCNN1B subunit, prevents the proteolytic activation of ENaC. N-glycosylated. N-linked glycans are processed to complex type during ENaC complex assembly and transport to the plasma membrane. Expressed in kidney (at protein level).

The protein localises to the apical cell membrane. The catalysed reaction is Na(+)(in) = Na(+)(out). With respect to regulation, originally identified and characterized by its inhibition by the diuretic drug amiloride. In terms of biological role, this is one of the three pore-forming subunits of the heterotrimeric epithelial sodium channel (ENaC), a critical regulator of sodium balance and fluid homeostasis. ENaC operates in epithelial tissues, where it mediates the electrodiffusion of sodium ions from extracellular fluid through the apical membrane of cells, with water following osmotically. It plays a key role in maintaining sodium homeostasis through electrogenic sodium reabsorption in the kidneys. Additionally, ENaC is essential for airway surface liquid homeostasis, which is crucial for proper mucus clearance. This is Epithelial sodium channel subunit gamma from Homo sapiens (Human).